The chain runs to 347 residues: MDGLMTAVVKQYHKEGADIVKKEIPKIGPDEVLIKVKATSICGTDVHIYVWNEWAKSRIKPPKTMGHEFVGEVVEIGENVTSVKVGDLVSAETHIVCGKCRACRTGNAHICENTLILGVDTDGAFAEYIKVPESNVWINDKNIPLEILSIQEPLGNAVHTVFSGDVVGKSVAVIGCGPIGMMAIPLLKRTGAAAIFAIEPADYRRELAHKLGATRVINPLREDVVSIIKSETEGYGADVVLDFSGNPTAIRQGLEYIAKGGRMSILGLPDNEVPIDITNNVVFKGITIQGITGRRMYDTWYTVKGLLKSGLAEDLKPIITHTFPLTEYQKGMELMIKGQCGKVVLYP.

A Zn(2+)-binding site is contributed by Cys42. Active-site charge relay system residues include Thr44 and His47. Zn(2+) contacts are provided by His67, Glu68, Cys97, Cys100, Cys103, and Cys111. Residues Ile179, Glu199, Arg204, 266–268 (LGL), and 291–292 (IT) each bind NAD(+).

It belongs to the zinc-containing alcohol dehydrogenase family. Homotetramer. Requires Zn(2+) as cofactor.

It is found in the cytoplasm. It catalyses the reaction L-threonine + NAD(+) = (2S)-2-amino-3-oxobutanoate + NADH + H(+). It participates in amino-acid degradation; L-threonine degradation via oxydo-reductase pathway; glycine from L-threonine: step 1/2. In terms of biological role, catalyzes the NAD(+)-dependent oxidation of L-threonine to 2-amino-3-ketobutyrate. The sequence is that of L-threonine 3-dehydrogenase from Caldanaerobacter subterraneus subsp. tengcongensis (strain DSM 15242 / JCM 11007 / NBRC 100824 / MB4) (Thermoanaerobacter tengcongensis).